We begin with the raw amino-acid sequence, 177 residues long: UPF0251 protein Cag_0886 (177 aa).

Residues 147 to 177 (GGCLSDEESDEQENEQRTVGYPESEEELEIE) form a disordered region.

The protein belongs to the UPF0251 family.

In Chlorobium chlorochromatii (strain CaD3), this protein is UPF0251 protein Cag_0886.